A 339-amino-acid polypeptide reads, in one-letter code: Tetraacyldisaccharide 4'-kinase (339 aa).

58–65 (NVGGVGKT) serves as a coordination point for ATP.

It belongs to the LpxK family.

It carries out the reaction a lipid A disaccharide + ATP = a lipid IVA + ADP + H(+). It participates in glycolipid biosynthesis; lipid IV(A) biosynthesis; lipid IV(A) from (3R)-3-hydroxytetradecanoyl-[acyl-carrier-protein] and UDP-N-acetyl-alpha-D-glucosamine: step 6/6. In terms of biological role, transfers the gamma-phosphate of ATP to the 4'-position of a tetraacyldisaccharide 1-phosphate intermediate (termed DS-1-P) to form tetraacyldisaccharide 1,4'-bis-phosphate (lipid IVA). The chain is Tetraacyldisaccharide 4'-kinase from Chromobacterium violaceum (strain ATCC 12472 / DSM 30191 / JCM 1249 / CCUG 213 / NBRC 12614 / NCIMB 9131 / NCTC 9757 / MK).